We begin with the raw amino-acid sequence, 1281 residues long: Tubulin polyglutamylase TTLL5 (1281 aa).

Residues 62–407 (RYHLSYKIVR…VCQDPAQRAS (346 aa)) form the TTL domain. Residues K180, 186–187 (RG), 208–211 (SRYI), and 221–223 (KFD) contribute to the ATP site. Position 186 (R186) interacts with a protein. Residue R247 participates in L-glutamate binding. 268-269 (TN) provides a ligand contact to ATP. L-glutamate contacts are provided by Y270, S271, and K293. Mg(2+) is bound by residues D353, E366, and N368. The segment at 378-488 (PLDLKIKASM…RGGFIRIFPT (111 aa)) is c-MTBD region. K384 is an L-glutamate binding site. 3 disordered regions span residues 577-614 (MNVK…LREN), 1072-1114 (SASA…LQTG), and 1199-1281 (SSAT…HTKI). Positions 584–604 (ESEEEEEVALDNEDEEQEASQ) are enriched in acidic residues. Composition is skewed to polar residues over residues 1086–1113 (SGPT…SLQT), 1199–1212 (SSAT…TTLP), 1240–1263 (ATSQ…SSLN), and 1270–1281 (ITSSTDPAHTKI).

This sequence belongs to the tubulin--tyrosine ligase family. In terms of assembly, interacts with the transcriptional coactivators NCOA1/SRC-1 and NCOA2/TIF2. The cofactor is Mg(2+). In terms of tissue distribution, expressed in the retina, found in the rod and cone photoreceptors (at protein level). Widely expressed with highest levels in heart and skeletal muscle and low levels in other tissues.

The protein resides in the cell projection. The protein localises to the cilium. It localises to the cytoplasm. It is found in the cytoskeleton. Its subcellular location is the cilium basal body. The protein resides in the nucleus. The enzyme catalyses L-glutamyl-[protein] + L-glutamate + ATP = gamma-L-glutamyl-L-glutamyl-[protein] + ADP + phosphate + H(+). The catalysed reaction is (L-glutamyl)(n)-gamma-L-glutamyl-L-glutamyl-[protein] + L-glutamate + ATP = (L-glutamyl)(n+1)-gamma-L-glutamyl-L-glutamyl-[protein] + ADP + phosphate + H(+). Its function is as follows. Polyglutamylase which modifies tubulin, generating polyglutamate side chains on the gamma-carboxyl group of specific glutamate residues within the C-terminal tail of tubulin. Preferentially mediates ATP-dependent initiation step of the polyglutamylation reaction over the elongation step. Preferentially modifies the alpha-tubulin tail over a beta-tail. Required for CCSAP localization to both polyglutamylated spindle and cilia microtubules. Increases the effects of transcriptional coactivator NCOA2/TIF2 in glucocorticoid receptor-mediated repression and induction and in androgen receptor-mediated induction. This is Tubulin polyglutamylase TTLL5 from Homo sapiens (Human).